The primary structure comprises 419 residues: Cytosine permease (419 aa).

At 1 to 19 the chain is on the cytoplasmic side; sequence MSQDNNFSQGPVPQSARKG. Residues 20–39 traverse the membrane as a helical segment; sequence VLALTFVMLGLTFFSASMWT. Residues 40–51 are Periplasmic-facing; the sequence is GGTLGTGLSYHD. Residues 52–71 form a helical membrane-spanning segment; it reads FFLAVLIGNLLLGIYTSFLG. At 72–100 the chain is on the cytoplasmic side; it reads YIGAKTGLTTHLLARFSFGVKGSWLPSLL. Residues 101–120 form a helical membrane-spanning segment; the sequence is LGGTQVGWFGVGVAMFAIPV. The Periplasmic segment spans residues 121 to 127; it reads GKATGLD. The chain crosses the membrane as a helical span at residues 128–147; sequence INLLIAVSGLLMTVTVFFGI. Residues 148 to 152 lie on the Cytoplasmic side of the membrane; sequence SALTV. The helical transmembrane segment at 153–172 threads the bilayer; it reads LSLIAVPAIACLGGYSVWLA. The Periplasmic portion of the chain corresponds to 173-192; sequence VNGMGGLDALKAVVPAQPLD. The helical transmembrane segment at 193–212 threads the bilayer; that stretch reads FNVALALVVGSFISAGTLTA. The Cytoplasmic portion of the chain corresponds to 213–221; it reads DFVRFGRNA. The chain crosses the membrane as a helical span at residues 222–242; that stretch reads KLAVLVAMVAFFLGNSLMFIF. At 243–257 the chain is on the periplasmic side; it reads GAAGAAALGMADISD. A helical membrane pass occupies residues 258 to 277; sequence VMIAQGLLLPAIVVLGLNIW. The Cytoplasmic portion of the chain corresponds to 278–300; it reads TTNDNALYASGLGFANITGMSSK. A helical transmembrane segment spans residues 301 to 320; that stretch reads TLSVINGIIGTVCALWLYNN. Position 321 (F321) is a topological domain, periplasmic. Residues 322 to 341 traverse the membrane as a helical segment; the sequence is VGWLTFLSAAIPPVGGVIIA. The Cytoplasmic segment spans residues 342–358; sequence DYLMNRRRYEHFATTRM. Residues 359–378 form a helical membrane-spanning segment; sequence MSVNWVAILAVALGIAAGHW. Residues 379 to 380 are Periplasmic-facing; it reads LP. A helical membrane pass occupies residues 381–400; sequence GIVPVNAVLGGALSYLILNP. Over 401–419 the chain is Cytoplasmic; that stretch reads ILNRKTTAAMTHVEANSVE.

This sequence belongs to the purine-cytosine permease (2.A.39) family.

The protein localises to the cell inner membrane. Functionally, required for cytosine transport into the cell. The polypeptide is Cytosine permease (codB) (Escherichia coli O157:H7).